The chain runs to 617 residues: Proline--tRNA ligase (617 aa).

Belongs to the class-II aminoacyl-tRNA synthetase family. ProS type 1 subfamily. As to quaternary structure, homodimer.

The protein resides in the cytoplasm. The enzyme catalyses tRNA(Pro) + L-proline + ATP = L-prolyl-tRNA(Pro) + AMP + diphosphate. In terms of biological role, catalyzes the attachment of proline to tRNA(Pro) in a two-step reaction: proline is first activated by ATP to form Pro-AMP and then transferred to the acceptor end of tRNA(Pro). As ProRS can inadvertently accommodate and process non-cognate amino acids such as alanine and cysteine, to avoid such errors it has two additional distinct editing activities against alanine. One activity is designated as 'pretransfer' editing and involves the tRNA(Pro)-independent hydrolysis of activated Ala-AMP. The other activity is designated 'posttransfer' editing and involves deacylation of mischarged Ala-tRNA(Pro). The misacylated Cys-tRNA(Pro) is not edited by ProRS. This is Proline--tRNA ligase from Streptococcus pneumoniae serotype 4 (strain ATCC BAA-334 / TIGR4).